Here is a 903-residue protein sequence, read N- to C-terminus: Protein translocase subunit SecA (903 aa).

ATP is bound by residues glutamine 87, 105–109 (GEGKT), and aspartate 513. Positions 840–853 (MEAQRRAQAEEAAR) are enriched in basic and acidic residues. The interval 840–903 (MEAQRRAQAE…KYKQCHGQIN (64 aa)) is disordered. 4 residues coordinate Zn(2+): cysteine 887, cysteine 889, cysteine 898, and histidine 899.

This sequence belongs to the SecA family. In terms of assembly, monomer and homodimer. Part of the essential Sec protein translocation apparatus which comprises SecA, SecYEG and auxiliary proteins SecDF-YajC and YidC. Requires Zn(2+) as cofactor.

Its subcellular location is the cell inner membrane. It localises to the cytoplasm. It catalyses the reaction ATP + H2O + cellular proteinSide 1 = ADP + phosphate + cellular proteinSide 2.. Its function is as follows. Part of the Sec protein translocase complex. Interacts with the SecYEG preprotein conducting channel. Has a central role in coupling the hydrolysis of ATP to the transfer of proteins into and across the cell membrane, serving both as a receptor for the preprotein-SecB complex and as an ATP-driven molecular motor driving the stepwise translocation of polypeptide chains across the membrane. This is Protein translocase subunit SecA from Vibrio cholerae serotype O1 (strain M66-2).